The following is a 908-amino-acid chain: Oxysterol-binding protein 2 (908 aa).

Residues 42 to 112 (SAFGSGPASK…GLWPGSENGT (71 aa)) form a disordered region. Polar residues predominate over residues 81–90 (EPGSQTTSVP). The 93-residue stretch at 179 to 271 (LDSYKGWLLK…WITALELAKA (93 aa)) folds into the PH domain. 3 disordered regions span residues 279–299 (TQSDDSGDDDEEPAAPADNSE), 413–445 (RAFCNTPGGPASSSKSFSEGSFLTSKGENSEED), and 822–843 (LMERGRWDEANTEKQRLEEKQR). Residue S284 is modified to Phosphoserine. Over residues 424 to 437 (SSSKSFSEGSFLTS) the composition is skewed to low complexity.

This sequence belongs to the OSBP family. As to quaternary structure, interacts with CCDC159. As to expression, expressed in the testis (at protein level). Expressed in postmeiotic germ cells of the testis.

It is found in the membrane. The protein resides in the cytoplasmic vesicle. The protein localises to the secretory vesicle. It localises to the acrosome. Functionally, binds 7-ketocholesterol. Acts during spermatid development where its function is required prior to the removal of cytoplasm from the sperm head. The polypeptide is Oxysterol-binding protein 2 (Osbp2) (Mus musculus (Mouse)).